A 511-amino-acid polypeptide reads, in one-letter code: RNA polymerase principal sigma factor HrdB (511 aa).

Residues 72–186 form a disordered region; the sequence is SAAEPKRTRK…AATEEPEGTE (115 aa). Residues 78-93 show a composition bias toward basic residues; the sequence is RTRKSVAAKSPAKRTA. Residues 94 to 121 are compositionally biased toward low complexity; sequence TKAVAAKPVTSRKATAPAAPAAPATEPA. Over residues 132 to 158 the composition is skewed to basic residues; the sequence is AAAKKTTAKKATAKKTTAKKAAAKKTT. The interval 211–347 is binds RNA polymerase-binding protein RbpA; sequence TADPVKDYLK…ITRAMADQAR (137 aa). Positions 278 to 348 are sigma-70 factor domain-2; that stretch reads LLEANLRLVV…TRAMADQART (71 aa). The Interaction with polymerase core subunit RpoC signature appears at 302-305; that stretch reads DLIQ. The segment at 357–433 is sigma-70 factor domain-3; it reads EVINKLARVQ…DSEAVVPADA (77 aa). Positions 446-499 are sigma-70 factor domain-4; the sequence is VLDTLSEREAGVVSMRFGLTDGQPKTLDEIGKVYGVTRERIRQIESKTMSKLRH. The segment at residues 472–491 is a DNA-binding region (H-T-H motif); it reads LDEIGKVYGVTRERIRQIES.

Belongs to the sigma-70 factor family. Homotrimer (Potential). interacts transiently with the RNA polymerase core complex. Interacts with RNA polymerase-binding protein RbpA via its sigma-2 region (residues 211-347) in a free form.

Its function is as follows. Sigma factors are initiation factors that promote the attachment of RNA polymerase to specific initiation sites and are then released. This sigma factor is the primary sigma factor during exponential growth. Its activity is stimulated by RbpA. The polypeptide is RNA polymerase principal sigma factor HrdB (hrdB) (Streptomyces coelicolor (strain ATCC BAA-471 / A3(2) / M145)).